The chain runs to 348 residues: Ion-translocating oxidoreductase complex subunit D (348 aa).

The next 5 membrane-spanning stretches (helical) occupy residues Leu-15–Ala-35, Tyr-36–Ile-56, Pro-67–Ser-87, Ile-88–Ala-108, and Val-125–Ile-145. Residue Thr-186 is modified to FMN phosphoryl threonine. 5 helical membrane-spanning segments follow: residues Leu-212–Ile-232, Ile-241–Pro-261, Leu-265–Thr-285, Leu-298–Pro-318, and Ala-320–Gln-340.

It belongs to the NqrB/RnfD family. As to quaternary structure, the complex is composed of six subunits: RnfA, RnfB, RnfC, RnfD, RnfE and RnfG. FMN is required as a cofactor.

The protein localises to the cell inner membrane. Its function is as follows. Part of a membrane-bound complex that couples electron transfer with translocation of ions across the membrane. The chain is Ion-translocating oxidoreductase complex subunit D from Actinobacillus pleuropneumoniae serotype 5b (strain L20).